A 404-amino-acid chain; its full sequence is Probable tRNA sulfurtransferase (404 aa).

In terms of domain architecture, THUMP spans 61-166; it reads QTLVTGLPKI…HDATYMMAQV (106 aa). Residues 184 to 185, 209 to 210, Arg266, Gly288, and Gln297 contribute to the ATP site; these read ML and HF.

Belongs to the ThiI family.

It localises to the cytoplasm. The enzyme catalyses [ThiI sulfur-carrier protein]-S-sulfanyl-L-cysteine + a uridine in tRNA + 2 reduced [2Fe-2S]-[ferredoxin] + ATP + H(+) = [ThiI sulfur-carrier protein]-L-cysteine + a 4-thiouridine in tRNA + 2 oxidized [2Fe-2S]-[ferredoxin] + AMP + diphosphate. It catalyses the reaction [ThiS sulfur-carrier protein]-C-terminal Gly-Gly-AMP + S-sulfanyl-L-cysteinyl-[cysteine desulfurase] + AH2 = [ThiS sulfur-carrier protein]-C-terminal-Gly-aminoethanethioate + L-cysteinyl-[cysteine desulfurase] + A + AMP + 2 H(+). The protein operates within cofactor biosynthesis; thiamine diphosphate biosynthesis. Its function is as follows. Catalyzes the ATP-dependent transfer of a sulfur to tRNA to produce 4-thiouridine in position 8 of tRNAs, which functions as a near-UV photosensor. Also catalyzes the transfer of sulfur to the sulfur carrier protein ThiS, forming ThiS-thiocarboxylate. This is a step in the synthesis of thiazole, in the thiamine biosynthesis pathway. The sulfur is donated as persulfide by IscS. The polypeptide is Probable tRNA sulfurtransferase (Lysinibacillus sphaericus (strain C3-41)).